The sequence spans 334 residues: GTP 3',8-cyclase (334 aa).

Positions Gly-11–Ala-236 constitute a Radical SAM core domain. Position 20 (Arg-20) interacts with GTP. [4Fe-4S] cluster-binding residues include Cys-27 and Cys-31. Tyr-33 provides a ligand contact to S-adenosyl-L-methionine. Cys-34 is a binding site for [4Fe-4S] cluster. Arg-69 is a GTP binding site. Gly-73 lines the S-adenosyl-L-methionine pocket. GTP is bound at residue Thr-100. Position 124 (Ser-124) interacts with S-adenosyl-L-methionine. A GTP-binding site is contributed by Lys-161. Residue Met-195 participates in S-adenosyl-L-methionine binding. 2 residues coordinate [4Fe-4S] cluster: Cys-260 and Cys-263. Arg-265–Arg-267 serves as a coordination point for GTP. [4Fe-4S] cluster is bound at residue Cys-277.

It belongs to the radical SAM superfamily. MoaA family. In terms of assembly, monomer and homodimer. The cofactor is [4Fe-4S] cluster.

It carries out the reaction GTP + AH2 + S-adenosyl-L-methionine = (8S)-3',8-cyclo-7,8-dihydroguanosine 5'-triphosphate + 5'-deoxyadenosine + L-methionine + A + H(+). Its pathway is cofactor biosynthesis; molybdopterin biosynthesis. Functionally, catalyzes the cyclization of GTP to (8S)-3',8-cyclo-7,8-dihydroguanosine 5'-triphosphate. The chain is GTP 3',8-cyclase from Pseudomonas putida (strain ATCC 47054 / DSM 6125 / CFBP 8728 / NCIMB 11950 / KT2440).